Consider the following 167-residue polypeptide: MFRLSNYMLRKSQFPQGLVRAPFGIRGYAQAVQKNEKLVLSMALPYQTIYEKVPVTQVDIPAEDGEMGILKDHVPMIQCLKPGVISVTDESSNKSKYFISGGFAVQQPSNELSITVPEAYKLEDFSSSVANQLLEKHKAEMNSSDEGVAAEAAVRVSVLESLVRALK.

The transit peptide at 1 to 28 (MFRLSNYMLRKSQFPQGLVRAPFGIRGY) directs the protein to the mitochondrion.

Belongs to the ATPase epsilon chain family. In terms of assembly, F-type ATPases have 2 components, CF(1) - the catalytic core - and CF(0) - the membrane proton channel. CF(1) has five subunits: alpha(3), beta(3), gamma(1), delta(1), epsilon(1). CF(0) has three main subunits: a, b and c.

Its subcellular location is the mitochondrion. It is found in the mitochondrion inner membrane. Functionally, mitochondrial membrane ATP synthase (F(1)F(0) ATP synthase or Complex V) produces ATP from ADP in the presence of a proton gradient across the membrane which is generated by electron transport complexes of the respiratory chain. F-type ATPases consist of two structural domains, F(1) - containing the extramembraneous catalytic core, and F(0) - containing the membrane proton channel, linked together by a central stalk and a peripheral stalk. During catalysis, ATP turnover in the catalytic domain of F(1) is coupled via a rotary mechanism of the central stalk subunits to proton translocation. Part of the complex F(1) domain and of the central stalk which is part of the complex rotary element. Rotation of the central stalk against the surrounding alpha(3)beta(3) subunits leads to hydrolysis of ATP in three separate catalytic sites on the beta subunits. This chain is ATP synthase subunit delta, mitochondrial (atp16), found in Schizosaccharomyces pombe (strain 972 / ATCC 24843) (Fission yeast).